Here is a 123-residue protein sequence, read N- to C-terminus: Alpha-lactalbumin (123 aa).

The C-type lysozyme domain maps to 1-123; it reads KQFTKCELSQ…KLEQWLCEKE (123 aa). 4 disulfides stabilise this stretch: Cys-6–Cys-120, Cys-28–Cys-111, Cys-61–Cys-77, and Cys-73–Cys-91. Residue Asn-45 is glycosylated (N-linked (GlcNAc...) asparagine). The Ca(2+) site is built by Lys-79, Asp-82, Asp-84, Asp-87, and Asp-88.

This sequence belongs to the glycosyl hydrolase 22 family. Lactose synthase (LS) is a heterodimer of a catalytic component, beta1,4-galactosyltransferase (beta4Gal-T1) and a regulatory component, alpha-lactalbumin (LA). As to expression, mammary gland specific. Secreted in milk.

It is found in the secreted. Regulatory subunit of lactose synthase, changes the substrate specificity of galactosyltransferase in the mammary gland making glucose a good acceptor substrate for this enzyme. This enables LS to synthesize lactose, the major carbohydrate component of milk. In other tissues, galactosyltransferase transfers galactose onto the N-acetylglucosamine of the oligosaccharide chains in glycoproteins. This is Alpha-lactalbumin (LALBA) from Papio cynocephalus (Yellow baboon).